A 321-amino-acid polypeptide reads, in one-letter code: Ferredoxin--NADP reductase (321 aa).

Positions 28, 36, 41, 81, 115, 274, and 315 each coordinate FAD.

Belongs to the ferredoxin--NADP reductase type 2 family. In terms of assembly, homodimer. FAD serves as cofactor.

The enzyme catalyses 2 reduced [2Fe-2S]-[ferredoxin] + NADP(+) + H(+) = 2 oxidized [2Fe-2S]-[ferredoxin] + NADPH. The chain is Ferredoxin--NADP reductase from Frankia alni (strain DSM 45986 / CECT 9034 / ACN14a).